We begin with the raw amino-acid sequence, 317 residues long: MANSSSFSPSTTVTDLISTVHDDIIESHILTRLDGATLASVSCASSHLHHLASNEILWSKICRSTWPSCSGGSRSFFSDAYSMVETAGTVSDLDRPFPELISAVDLHYRGKLIFSRVVKTETTTAWFKSSPLRIDLVDTKDTVATPIKRRQRTEDTCRDLEKDLTLSWIVIDPIGKRAANISSHRPVSVQRNWISGEVEAQFATVVGAVECVITVVTCGEEEMHVREVSLKVEKMEGTHLNGRDSLVILRSVMEGKRVNGSRREVESKKRHEEFMEKKREMKEKKMRVESVFDILTVAFGILGFVLLVVFCLWRTSI.

The F-box domain maps to 25 to 74 (IESHILTRLDGATLASVSCASSHLHHLASNEILWSKICRSTWPSCSGGSR).

In Arabidopsis thaliana (Mouse-ear cress), this protein is Probable F-box protein At2g36090.